A 630-amino-acid chain; its full sequence is Plastin-1 (630 aa).

An N-acetylmethionine modification is found at Met1. 2 EF-hand domains span residues 11-46 (EELE…ASLP) and 51-86 (KVRE…LKSK). Asp24, Asp26, Ser28, Tyr30, Glu35, Asp64, Asn66, Asp68, Arg70, and Glu75 together coordinate Ca(2+). Actin-binding regions lie at residues 108 to 381 (TSSI…GLHK) and 382 to 626 (PDNN…GKGL). 4 Calponin-homology (CH) domains span residues 122–238 (EEEK…KVGL), 266–377 (LSPE…NTYP), 396–505 (SKEE…RRYT), and 517–626 (KVND…GKGL).

As to quaternary structure, monomer. Phosphorylated.

It is found in the cytoplasm. The protein localises to the cell projection. Its subcellular location is the stereocilium. Its function is as follows. Actin-bundling protein. In the inner ear, it is required for stereocilia formation. Mediates liquid packing of actin filaments that is necessary for stereocilia to grow to their proper dimensions. The chain is Plastin-1 (PLS1) from Bos taurus (Bovine).